The primary structure comprises 153 residues: 6,7-dimethyl-8-ribityllumazine synthase (153 aa).

5-amino-6-(D-ribitylamino)uracil is bound by residues Phe22, 56–58 (AFE), and 80–82 (TVI). 85–86 (ST) lines the (2S)-2-hydroxy-3-oxobutyl phosphate pocket. His88 functions as the Proton donor in the catalytic mechanism. Phe113 serves as a coordination point for 5-amino-6-(D-ribitylamino)uracil. Arg127 serves as a coordination point for (2S)-2-hydroxy-3-oxobutyl phosphate.

Belongs to the DMRL synthase family. As to quaternary structure, forms an icosahedral capsid composed of 60 subunits, arranged as a dodecamer of pentamers.

The enzyme catalyses (2S)-2-hydroxy-3-oxobutyl phosphate + 5-amino-6-(D-ribitylamino)uracil = 6,7-dimethyl-8-(1-D-ribityl)lumazine + phosphate + 2 H2O + H(+). It functions in the pathway cofactor biosynthesis; riboflavin biosynthesis; riboflavin from 2-hydroxy-3-oxobutyl phosphate and 5-amino-6-(D-ribitylamino)uracil: step 1/2. Functionally, catalyzes the formation of 6,7-dimethyl-8-ribityllumazine by condensation of 5-amino-6-(D-ribitylamino)uracil with 3,4-dihydroxy-2-butanone 4-phosphate. This is the penultimate step in the biosynthesis of riboflavin. The sequence is that of 6,7-dimethyl-8-ribityllumazine synthase from Actinobacillus pleuropneumoniae serotype 3 (strain JL03).